We begin with the raw amino-acid sequence, 357 residues long: NmrA-like family domain-containing oxidoreductase notA' (357 aa).

NADP(+) contacts are provided by residues 13 to 18 (GATGAQ), 39 to 43 (RKPES), 60 to 61 (DG), 81 to 83 (TNS), Lys140, and 164 to 167 (YMDV).

This sequence belongs to the NmrA-type oxidoreductase family.

Its function is as follows. NmrA-like family domain-containing oxidoreductase; part of the gene cluster that mediates the biosynthesis of notoamide, a fungal indole alkaloid that belongs to a family of natural products containing a characteristic bicyclo[2.2.2]diazaoctane core. The first step of notoamide biosynthesis involves coupling of L-proline and L-tryptophan by the bimodular NRPS notE', to produce cyclo-L-tryptophan-L-proline called brevianamide F. The reverse prenyltransferase notF' then acts as a deoxybrevianamide E synthase and converts brevianamide F to deoxybrevianamide E via reverse prenylation at C-2 of the indole ring leading to the bicyclo[2.2.2]diazaoctane core. Deoxybrevianamide E is further hydroxylated at C-6 of the indole ring, likely catalyzed by the cytochrome P450 monooxygenase notG', to yield 6-hydroxy-deoxybrevianamide E. 6-hydroxy-deoxybrevianamide E is a specific substrate of the prenyltransferase notC' for normal prenylation at C-7 to produce 6-hydroxy-7-prenyl-deoxybrevianamide, also called notoamide S. As the proposed pivotal branching point in notoamide biosynthesis, notoamide S can be diverted to notoamide E through an oxidative pyran ring closure putatively catalyzed by either notH' cytochrome P450 monooxygenase or the notD' FAD-linked oxidoreductase. This step would be followed by an indole 2,3-epoxidation-initiated pinacol-like rearrangement catalyzed by the notB' FAD-dependent monooxygenase leading to the formation of notoamide C and notoamide D. On the other hand notoamide S is converted to notoamide T by notH' (or notD'), a bifunctional oxidase that also functions as the intramolecular Diels-Alderase responsible for generation of (-)-notoamide T. To generate antipodal (+)-notoaminide T, notH (or notD) in Aspergillus strain MF297-2 is expected to catalyze a Diels-Alder reaction leading to the opposite stereochemistry. The remaining oxidoreductase notD' (or notH') likely catalyzes the oxidative pyran ring formation to yield (-)-stephacidin A. The FAD-dependent monooxygenase notI' is highly similar to notB' and is predicted to catalyze a similar conversion from (-)-stephacidin A to (+)-notoamide B via the 2,3-epoxidation of (-)-stephacidin A followed by a pinacol-type rearrangement. Finally, it remains unclear which enzyme could be responsible for the final hydroxylation steps leading to notoamide A and sclerotiamide. In Aspergillus versicolor, this protein is NmrA-like family domain-containing oxidoreductase notA'.